The chain runs to 252 residues: Chitooligosaccharide deacetylase (252 aa).

Residues H61 and H125 each contribute to the Mg(2+) site.

The protein belongs to the YdjC deacetylase family. ChbG subfamily. Homodimer. It depends on Mg(2+) as a cofactor.

The protein resides in the cytoplasm. It catalyses the reaction N,N'-diacetylchitobiose + H2O = N-acetyl-beta-D-glucosaminyl-(1-&gt;4)-D-glucosamine + acetate. It carries out the reaction diacetylchitobiose-6'-phosphate + H2O = N'-monoacetylchitobiose-6'-phosphate + acetate. The protein operates within glycan degradation; chitin degradation. Functionally, involved in the degradation of chitin. ChbG is essential for growth on the acetylated chitooligosaccharides chitobiose and chitotriose but is dispensable for growth on cellobiose and chitosan dimer, the deacetylated form of chitobiose. Deacetylation of chitobiose-6-P and chitotriose-6-P is necessary for both the activation of the chb promoter by the regulatory protein ChbR and the hydrolysis of phosphorylated beta-glucosides by the phospho-beta-glucosidase ChbF. Catalyzes the removal of only one acetyl group from chitobiose-6-P to yield monoacetylchitobiose-6-P, the inducer of ChbR and the substrate of ChbF. In Salmonella typhimurium (strain LT2 / SGSC1412 / ATCC 700720), this protein is Chitooligosaccharide deacetylase.